We begin with the raw amino-acid sequence, 204 residues long: Peptide deformylase (204 aa).

Fe cation-binding residues include Cys131 and His174. Glu175 is an active-site residue. His178 lines the Fe cation pocket.

This sequence belongs to the polypeptide deformylase family. The cofactor is Fe(2+).

The enzyme catalyses N-terminal N-formyl-L-methionyl-[peptide] + H2O = N-terminal L-methionyl-[peptide] + formate. Removes the formyl group from the N-terminal Met of newly synthesized proteins. Requires at least a dipeptide for an efficient rate of reaction. N-terminal L-methionine is a prerequisite for activity but the enzyme has broad specificity at other positions. The polypeptide is Peptide deformylase (Streptococcus thermophilus (strain CNRZ 1066)).